The chain runs to 542 residues: DM7 family protein CG15333 (542 aa).

It belongs to the DM7 family.

In Drosophila melanogaster (Fruit fly), this protein is DM7 family protein CG15333.